Consider the following 519-residue polypeptide: Seed lectin (519 aa).

2 disulfides stabilise this stretch: cysteine 249–cysteine 258 and cysteine 274–cysteine 293. 2 Ricin B-type lectin domains span residues 261 to 387 (ETRT…WRVG) and 390 to 518 (VQPI…WVLF). The 1-alpha repeat unit spans residues 271-311 (DALCVDVAGALTSDGSRLILYPCGQQVNQKWTFHSDGTVRS). Residues 276–279 (DVAG) and 296–298 (QVN) each bind a carbohydrate. Residues 312–352 (LGKCLATNNSKFGNLVVIYDCSKLAAEDISWDVSVGGTIMN) form a 1-beta repeat. Cysteine 315 and cysteine 332 are oxidised to a cystine. The stretch at 356–388 (EDLALTSNKATRSTNLTMEVNTYSASQGWRVGN) is one 1-gamma repeat. The N-linked (GlcNAc...) asparagine glycan is linked to asparagine 370. The stretch at 401–438 (DDMCLEATDGNTNMWLEECVPNQREQSWALYSDGTIRV) is one 2-alpha repeat. Intrachain disulfides connect cysteine 404–cysteine 419 and cysteine 445–cysteine 464. A 2-beta repeat occupies 442–482 (RELCVTASSSTYDNWKVITILNCDGSNNQRWVFLADGSIST). Residues aspartate 454, 491 to 494 (DVAR), 505 to 508 (HRPH), and asparagine 512 contribute to the a carbohydrate site. One copy of the 2-gamma repeat lies at 486-513 (QRLAMDVARSDVDLKKIILHRPHGDLNQ).

In the N-terminal section; belongs to the ribosome-inactivating protein family. Type 2 RIP subfamily. In terms of assembly, heterotrimer consisting of Aalpha, Abeta and B chains with Abeta and B being disulfide-linked.

Seed lectin similar to type 2 ribosome-inactivating proteins. The Aalpha and Abeta chains constitute the rRNA glycosidase domain and the B chain the carbohydrate-binding lectin domain. Is predicted to have no glycosidase activity and, hence, to be non-toxic, due to small changes in both the nucleotide binding and carbohydrate binding capabilities. Binds galactose and derivatives with a preference for the beta-anomeric forms. Binds prophyrins. Has hemagglutinating activity towards rabbit and human erythrocytes. The chain is Seed lectin from Trichosanthes anguina (Snake gourd).